The chain runs to 389 residues: uncharacterized protein (389 aa).

3 WD repeats span residues 11–53 (SFGS…QKIK), 146–186 (SHHD…EEDA), and 289–330 (AHGD…LDIP). Residue serine 351 is modified to Phosphoserine. A disordered region spans residues 361 to 389 (QKESVSTRPRKEKHKKAKKHSMKSRFKPY). The segment covering 368-389 (RPRKEKHKKAKKHSMKSRFKPY) has biased composition (basic residues).

This is an uncharacterized protein from Saccharomyces cerevisiae (strain ATCC 204508 / S288c) (Baker's yeast).